The sequence spans 335 residues: Galactosylgalactosylxylosylprotein 3-beta-glucuronosyltransferase 1 (335 aa).

Topologically, residues 1–6 (MPKRRD) are cytoplasmic. Residues 3 to 5 (KRR) are essential for transport from endoplasmic reticulum to Golgi apparatus and interaction with SAR1A. A helical; Signal-anchor for type II membrane protein membrane pass occupies residues 7-27 (ILAIVLIVLPWTLLVTVWHQS). Residues 28-335 (TIAPLLTTHK…KGFTDPTVEI (308 aa)) are Lumenal-facing. Residue 92–94 (PTY) coordinates UDP-alpha-D-glucuronate. Phosphothreonine occurs at positions 104 and 109. Position 123 (Asp-123) interacts with UDP-alpha-D-glucuronate. Residue Asn-141 is glycosylated (N-linked (GlcNAc...) asparagine). UDP-alpha-D-glucuronate contacts are provided by Arg-166 and Arg-171. Asn-185 carries N-linked (GlcNAc...) asparagine glycosylation. Position 196–198 (196–198 (DDD)) interacts with UDP-alpha-D-glucuronate. Residue Asp-198 coordinates Mn(2+). Residues 246–255 (FDPHRPFAID) form an interaction with galactose moiety of substrate glycoprotein region. The Proton donor/acceptor role is filled by Glu-285. Asn-304 is a glycosylation site (N-linked (GlcNAc...) asparagine). A UDP-alpha-D-glucuronate-binding site is contributed by 312–314 (HTR).

It belongs to the glycosyltransferase 43 family. As to quaternary structure, homodimer. Interacts with SAR1A. Mn(2+) is required as a cofactor. Post-translationally, the soluble form derives from the membrane form by proteolytic processing.

The protein resides in the golgi apparatus membrane. It is found in the secreted. The enzyme catalyses 3-O-(beta-D-galactosyl-(1-&gt;3)-beta-D-galactosyl-(1-&gt;4)-beta-D-xylosyl)-L-seryl-[protein] + UDP-alpha-D-glucuronate = 3-O-(beta-D-GlcA-(1-&gt;3)-beta-D-Gal-(1-&gt;3)-beta-D-Gal-(1-&gt;4)-beta-D-Xyl)-L-seryl-[protein] + UDP + H(+). The protein operates within protein modification; protein glycosylation. Involved in the biosynthesis of L2/HNK-1 carbohydrate epitope on glycoproteins. Can also play a role in glycosaminoglycan biosynthesis. Substrates include asialo-orosomucoid (ASOR), asialo-fetuin, and asialo-neural cell adhesion molecule. Requires sphingomyelin for activity: stearoyl-sphingomyelin was the most effective, followed by palmitoyl-sphingomyelin and lignoceroyl-sphingomyelin. Activity was demonstrated only for sphingomyelin with a saturated fatty acid and not for that with an unsaturated fatty acid, regardless of the length of the acyl group. This chain is Galactosylgalactosylxylosylprotein 3-beta-glucuronosyltransferase 1, found in Canis lupus familiaris (Dog).